The following is a 64-amino-acid chain: Defensin beta 4A (64 aa).

An N-terminal signal peptide occupies residues 1–23 (MRVLYLLFSFLFIFLMPLPGVFG). Disulfide bonds link cysteine 31–cysteine 60, cysteine 38–cysteine 53, and cysteine 43–cysteine 61. A phosphatidylinositol 4,5-bisphosphate (PIP2) binding region spans residues 33 to 48 (KNGAICHPVFCPRRYK).

It belongs to the beta-defensin family. LAP/TAP subfamily. Monomer. Homodimer.

The protein localises to the secreted. Functionally, exhibits antimicrobial activity against Gram-negative bacteria and Gram-positive bacteria, with highest activity against Gram-negative bacteria. Antimicrobial activity against P.aruginosa seems to be salt-sensitive and is reduced with high salt concentrations greater than 25 mM. Also exhibits antimicrobial activity against the yeast C.albicans. Permeabilizes C.albicans cell membranes via targeting plasma membrane lipid phosphatidylinositol 4,5-bisphosphate (PIP2), thereby leading to cell fragmentation and cell death. Acts as a ligand for C-C chemokine receptor CCR6. Binds to CCR6 and induces chemotactic activity of CCR6-expressing cells, such as immature dendritic cells and memory T cells. In Macaca mulatta (Rhesus macaque), this protein is Defensin beta 4A (DEFB4A).